A 583-amino-acid chain; its full sequence is Radixin (583 aa).

The FERM domain maps to 5-295 (INVRVTTMDA…GNHELYMRRR (291 aa)). An a 1,2-diacyl-sn-glycero-3-phospho-(1D-myo-inositol)-binding site is contributed by 60–63 (KLNK). Lysine 83 carries the post-translational modification N6-succinyllysine. Lysine 278 contributes to the a 1,2-diacyl-sn-glycero-3-phospho-(1D-myo-inositol) binding site. 3 disordered regions span residues 310–336 (REEK…AEKE), 374–407 (ELDQ…AKQA), and 458–526 (KTKE…RVNK). Over residues 374 to 400 (ELDQERKRAKEEAERLEKERRAAEEAK) the composition is skewed to basic and acidic residues. Positions 469 to 480 (APPPPPPPPVVP) are enriched in pro residues. Composition is skewed to basic and acidic residues over residues 483–492 (ENEHDEHDEN) and 506–525 (MNHR…ERVN). Position 564 is a phosphothreonine; by ROCK2 (threonine 564).

As to quaternary structure, interacts with CPNE1 (via VWFA domain) and CPNE4 (via VWFA domain). Binds NHERF1. Interacts with NHERF1, NHERF2, LAYN, MME/NEP and ICAM2. Interacts (via FERM domain) with SPN/CD43 cytoplasmic tail. Interacts with CD44. Interacts with CLIC5; may work together in a complex which also includes EZR and MYO6 to stabilize linkages between the plasma membrane and subjacent actin cytoskeleton at the base of stereocilia. Post-translationally, phosphorylated by tyrosine-protein kinases. Phosphorylation by ROCK2 suppresses the head-to-tail association of the N-terminal and C-terminal halves resulting in an opened conformation which is capable of actin and membrane-binding.

The protein resides in the cell membrane. It is found in the cytoplasm. The protein localises to the cytoskeleton. It localises to the cleavage furrow. Its subcellular location is the cell projection. The protein resides in the microvillus. It is found in the stereocilium. With respect to regulation, a head-to-tail association, of the N-terminal and C-terminal halves results in a closed conformation (inactive form) which is incapable of actin or membrane-binding. Probably plays a crucial role in the binding of the barbed end of actin filaments to the plasma membrane. This Sus scrofa (Pig) protein is Radixin (RDX).